We begin with the raw amino-acid sequence, 463 residues long: MAHLVPAALPDSIFRAYDIRGVVGKTLHAETAYWIGRAIGAQSLAQGEPQVSVGRDGRLSGPMLVEQLIKGLVDAGCNVSDVGLVPTPALYYAANVLAGKSGVMLTGSHNPSDYNGFKIVIAGDTLANEQIQALLTRLKTNDLTLAQGRVEKVEILDRYFKQIVGDVKLAKKLKVVVDCGNGAAGVVAPQLIEALGCEVIPLFCEVDGNFPNHHPDPGKPENLEDLIAKVKETGADIGLAFDGDGDRVGVVTNTGSIVYPDRLLMLFAQDVLSRNPGAEIIFDVKCTRRLTPLIEQHGGRALMWKTGHSLIKKKMKQTGSLLAGEMSGHIFIKERWYGFDDGIYSAARLLEILSKTEQSAENLFAAFPNDISTPEINIDVTDEGKFSIIDALQRDADWGEANLTTIDGVRVDYANGWGLVRASNTTPVLVLRFEADSDAELQRIKDVFRTQLLRVEPELQLPF.

Catalysis depends on Ser-108, which acts as the Phosphoserine intermediate. Mg(2+) is bound by residues Ser-108, Asp-242, Asp-244, and Asp-246. Glu-325, Ser-327, and His-329 together coordinate substrate.

Belongs to the phosphohexose mutase family. As to quaternary structure, monomer. Requires Mg(2+) as cofactor.

It catalyses the reaction alpha-D-mannose 1-phosphate = D-mannose 6-phosphate. It carries out the reaction alpha-D-glucose 1-phosphate = alpha-D-glucose 6-phosphate. It functions in the pathway nucleotide-sugar biosynthesis; GDP-alpha-D-mannose biosynthesis; alpha-D-mannose 1-phosphate from D-fructose 6-phosphate: step 2/2. Its pathway is bacterial outer membrane biogenesis; lipopolysaccharide biosynthesis. Functionally, the phosphomannomutase activity produces a precursor for alginate polymerization. The alginate layer causes a mucoid phenotype and provides a protective barrier against host immune defenses and antibiotics. Also involved in core-LPS biosynthesis due to its phosphoglucomutase activity. Essential for biofilm production. In Pseudomonas putida (strain ATCC 47054 / DSM 6125 / CFBP 8728 / NCIMB 11950 / KT2440), this protein is Phosphomannomutase/phosphoglucomutase (algC).